Reading from the N-terminus, the 110-residue chain is UPF0060 membrane protein RPA3838 (110 aa).

Transmembrane regions (helical) follow at residues 4–24 (LLTF…FWAW), 31–51 (PLWL…LTLA), 59–79 (AYAA…WAIE), and 85–105 (QWDV…LFGP).

Belongs to the UPF0060 family.

It localises to the cell inner membrane. The polypeptide is UPF0060 membrane protein RPA3838 (Rhodopseudomonas palustris (strain ATCC BAA-98 / CGA009)).